The sequence spans 1504 residues: NAC-alpha domain-containing protein 1 (1504 aa).

Disordered stretches follow at residues K127 to W150, D208 to H261, P315 to S356, L396 to A436, D460 to Q525, G539 to V565, V701 to V812, D834 to A1064, P1099 to K1366, and P1430 to P1467. Residues S342–S354 are compositionally biased toward low complexity. Residues Q398 to V407 are compositionally biased toward acidic residues. Composition is skewed to low complexity over residues A408–D422 and S462–G475. The span at S510–Q525 shows a compositional bias: polar residues. The span at P775–T792 shows a compositional bias: polar residues. The span at P930–N939 shows a compositional bias: low complexity. The segment covering S958–T968 has biased composition (polar residues). Positions E989–R1005 are enriched in basic and acidic residues. S998 carries the post-translational modification Phosphoserine. Over residues S1016 to A1031 the composition is skewed to polar residues. Pro residues predominate over residues P1159–Q1171. Polar residues predominate over residues V1213–N1222. Residue S1268 is modified to Phosphoserine. An NAC-A/B domain is found at S1354–V1419. Positions E1451–G1464 are enriched in acidic residues.

This sequence belongs to the NAC-alpha family.

It is found in the cytoplasm. The protein localises to the nucleus. In terms of biological role, may prevent inappropriate targeting of non-secretory polypeptides to the endoplasmic reticulum (ER). May bind to nascent polypeptide chains as they emerge from the ribosome and block their interaction with the signal recognition particle (SRP), which normally targets nascent secretory peptides to the ER. May also reduce the inherent affinity of ribosomes for protein translocation sites in the ER membrane (M sites). The protein is NAC-alpha domain-containing protein 1 (Nacad) of Mus musculus (Mouse).